The chain runs to 297 residues: Small ribosomal subunit protein uS2 (297 aa).

The interval 276-297 (DWASSAPAEGWAGEAPATEAKW) is disordered.

It belongs to the universal ribosomal protein uS2 family. As to quaternary structure, component of the small ribosomal subunit. Mature ribosomes consist of a small (40S) and a large (60S) subunit. The 40S subunit contains about 33 different proteins and 1 molecule of RNA (18S). The 60S subunit contains about 49 different proteins and 3 molecules of RNA (25S, 5.8S and 5S). Interacts with RPS21.

It is found in the cytoplasm. Required for the assembly and/or stability of the 40S ribosomal subunit. Required for the processing of the 20S rRNA-precursor to mature 18S rRNA in a late step of the maturation of 40S ribosomal subunits. The sequence is that of Small ribosomal subunit protein uS2 from Uncinocarpus reesii (strain UAMH 1704).